The following is a 137-amino-acid chain: MTVPEIISDGKSTRRNLQKLLFFGATSATLAIAALTSRSIATRKYIPTFFQLNTKIPTFSSKSEAQAALGLSSGLSLGIFAITTTGFCWALDISSASDFKQRMKTLFNTIDEKEYMNDSDPETNKIIEELEALINKK.

2 helical membrane passes run 20-42 and 69-91; these read LLFF…SIAT and LGLS…CWAL.

It belongs to the AIM11 family.

The protein resides in the membrane. The polypeptide is Altered inheritance of mitochondria protein 11 (AIM11) (Candida glabrata (strain ATCC 2001 / BCRC 20586 / JCM 3761 / NBRC 0622 / NRRL Y-65 / CBS 138) (Yeast)).